A 208-amino-acid chain; its full sequence is Ras-related protein M-Ras (208 aa).

GTP contacts are provided by Asp21, Gly22, Gly23, Val24, Gly25, Lys26, Ser27, Ala28, Phe38, Val39, Pro40, Tyr42, Pro44, and Thr45. Position 27 (Ser27) interacts with Mg(2+). Residues 42-50 (YDPTIEDSY) carry the Effector region motif. Positions 45 and 67 each coordinate Mg(2+). Residues Gly70, Asn126, Lys127, Asp129, Ser156, Ala157, and Lys158 each coordinate GTP. The residue at position 205 (Cys205) is a Cysteine methyl ester. A lipid anchor (S-geranylgeranyl cysteine) is attached at Cys205. The propeptide at 206–208 (VIL) is removed in mature form.

It belongs to the small GTPase superfamily. Ras family. Component of the SHOC2-MRAS-PP1c (SMP) holophosphatase complex consisting of SHOC2, GTP-bound M-Ras/MRAS and the catalytic subunit of protein phosphatase 1 (either PPP1CA, PPP1CB or PPP1CC). Interacts (active GTP-bound form) with both SHOC2 and PP1c (all isoforms) to form a tertiary complex; SHOC2 and PP1c preferably bind M-Ras/MRAS, but they also bind K-Ras/KRAS, N-Ras/NRAS and H-Ras/HRAS. Interacts with RGL3. Interacts (active GTP-bound form preferentially) with RGS14. Requires Mg(2+) as cofactor. In terms of tissue distribution, expression highly restricted to the brain and heart.

It is found in the cell membrane. The enzyme catalyses GTP + H2O = GDP + phosphate + H(+). Its function is as follows. Signal transducer in the Ras-MAPK signaling pathway that regulates cell proliferation and survival. Core component of the SHOC2-MRAS-PP1c (SMP) holophosphatase complex that regulates the MAPK pathway activation. The formation of the SMP complex only occurs when MRAS is GTP-bound. MRAS has low intrinsic GTPase activity and may require additional factors for activation. The SMP complex specifically dephosphorylates the inhibitory phosphorylation at 'Ser-259' of RAF1 kinase, 'Ser-365' of BRAF kinase and 'Ser-214' of ARAF kinase, stimulating their kinase activities. The chain is Ras-related protein M-Ras (MRAS) from Homo sapiens (Human).